The sequence spans 338 residues: Ketol-acid reductoisomerase (NADP(+)) (338 aa).

Residues 1-181 form the KARI N-terminal Rossmann domain; it reads MQVYYDKDCD…GGGRTGIIET (181 aa). NADP(+) is bound by residues 24–27, R47, S50, S52, and 82–85; these read YGSQ and DEFQ. H107 is an active-site residue. G133 lines the NADP(+) pocket. The 146-residue stretch at 182–327 folds into the KARI C-terminal knotted domain; that stretch reads TFKDETETDL…EKLRAMMPWI (146 aa). 4 residues coordinate Mg(2+): D190, E194, E226, and E230. S251 provides a ligand contact to substrate.

Belongs to the ketol-acid reductoisomerase family. The cofactor is Mg(2+).

The enzyme catalyses (2R)-2,3-dihydroxy-3-methylbutanoate + NADP(+) = (2S)-2-acetolactate + NADPH + H(+). It catalyses the reaction (2R,3R)-2,3-dihydroxy-3-methylpentanoate + NADP(+) = (S)-2-ethyl-2-hydroxy-3-oxobutanoate + NADPH + H(+). It functions in the pathway amino-acid biosynthesis; L-isoleucine biosynthesis; L-isoleucine from 2-oxobutanoate: step 2/4. Its pathway is amino-acid biosynthesis; L-valine biosynthesis; L-valine from pyruvate: step 2/4. Involved in the biosynthesis of branched-chain amino acids (BCAA). Catalyzes an alkyl-migration followed by a ketol-acid reduction of (S)-2-acetolactate (S2AL) to yield (R)-2,3-dihydroxy-isovalerate. In the isomerase reaction, S2AL is rearranged via a Mg-dependent methyl migration to produce 3-hydroxy-3-methyl-2-ketobutyrate (HMKB). In the reductase reaction, this 2-ketoacid undergoes a metal-dependent reduction by NADPH to yield (R)-2,3-dihydroxy-isovalerate. The sequence is that of Ketol-acid reductoisomerase (NADP(+)) from Teredinibacter turnerae (strain ATCC 39867 / T7901).